The chain runs to 518 residues: F-box protein At1g47056 (518 aa).

The F-box domain occupies 37–82; that stretch reads PDYTSSLPDECLALVFQFLNSGNRKRCALVCRRWMIVEGQNRYRLS.

This is F-box protein At1g47056 from Arabidopsis thaliana (Mouse-ear cress).